The sequence spans 746 residues: MMYQQQPKNQKQCKNIALHGYCRNSDKCEFSHELTPQQQQQQQQQQQQQQQQQQQQQQQQQQQQQQQQQQNSNGNGSNNTATSNNPIISPNSNIASPLKKSPIDNLTTSFQNLSTNQQTNHHWADHFQSGIPEYIPKQQLQQLQQQQLLQQQQQQALLLQQQQQQNYDDDQHLYPYGDNSVDDYEQHQYEPQPQPNNGIDPNMNNQFQINNFVAAQMRNASPQSYQQQFQQPNPSPQSSSQQQQQQQQQQQQAVYQQQQQQQPSSQPLAQNPSLQNNNNKLLQLQLQQHLQQIQAAQQQAQINQSYTPYPSYSQSVIRNKPGRRNIGSFFMSESLKQDILNQKSLLYLTLDPNDPRIKNIPPMLNKYHSLYPLDHDASRENQGKMFGYITSVYKAISTLDGLPYAIRRVEGFRLSSEYALQAAETWRNIQHPNIVSLKEIFVSKEFGDNSSLFFTYEFFPGSETLESKYLSQSGNPLSESVLWSFICQITSALKTIHSAGLVCRVIHPSKILLTGKNRIRMNGVGIFDVVNFDTPRILAQYQHEDLLLFGRLILTLACRSAQSTTTTNLSKSIEYVSNQYSKELYNLIVYLLTKPVINLPNIDEVVLMISGRLLQENNYLHTYTDDLETELSKEYENGRLFRLVTKLGFINERPLYDMDPRWSETGDRYLIKLFRDYIFHQVYDDGTPVLDFYHVVETLNKLDCGVDEKILLMSRDEQSLLVVSYKDLKKCIDSAFSELVSQKSHI.

Residues 7-35 (PKNQKQCKNIALHGYCRNSDKCEFSHELT) form a C3H1-type zinc finger. Low complexity predominate over residues 64–97 (QQQQQQQNSNGNGSNNTATSNNPIISPNSNIASP). 3 disordered regions span residues 64-100 (QQQQ…PLKK), 169-205 (DDQH…NMNN), and 219-275 (NASP…PSLQ). The segment covering 196-205 (NNGIDPNMNN) has biased composition (polar residues). The segment covering 221-275 (SPQSYQQQFQQPNPSPQSSSQQQQQQQQQQQQAVYQQQQQQQPSSQPLAQNPSLQ) has biased composition (low complexity). Residues 351–610 (DPNDPRIKNI…NIDEVVLMIS (260 aa)) are pseudokinase domain. ATP is bound by residues Arg-407, 457-464 (EFFPGSET), and 509-510 (SK). A coiled-coil region spans residues 611 to 649 (GRLLQENNYLHTYTDDLETELSKEYENGRLFRLVTKLGF). The knob domain stretch occupies residues 650 to 746 (INERPLYDMD…SELVSQKSHI (97 aa)).

Belongs to the protein kinase superfamily. PAN3 family. As to quaternary structure, homodimer. Forms a heterotrimer with a catalytic subunit PAN2 to form the poly(A)-nuclease (PAN) deadenylation complex. Interacts (via PAM-2 motif) with poly(A)-binding protein (via PABC domain), conferring substrate specificity of the enzyme complex.

Its subcellular location is the cytoplasm. In terms of biological role, regulatory subunit of the poly(A)-nuclease (PAN) deadenylation complex, one of two cytoplasmic mRNA deadenylases involved in mRNA turnover. PAN specifically shortens poly(A) tails of RNA and the activity is stimulated by poly(A)-binding protein (PABP). PAN deadenylation is followed by rapid degradation of the shortened mRNA tails by the CCR4-NOT complex. Deadenylated mRNAs are then degraded by two alternative mechanisms, namely exosome-mediated 3'-5' exonucleolytic degradation, or deadenylation-dependent mRNA decaping and subsequent 5'-3' exonucleolytic degradation by XRN1. PAN3 acts as a positive regulator for PAN activity, recruiting the catalytic subunit PAN2 to mRNA via its interaction with RNA and PABP. This is PAN2-PAN3 deadenylation complex subunit pan3 from Dictyostelium discoideum (Social amoeba).